The following is a 484-amino-acid chain: tRNA sulfurtransferase (484 aa).

Residues 63-167 (EAFGERLACI…NEQLYLVDKR (105 aa)) enclose the THUMP domain. ATP contacts are provided by residues 185 to 186 (LI), K267, G289, and Q298. A disulfide bridge links C346 with C458. The Rhodanese domain maps to 406–484 (ISADEVIIDV…GYSNVKVYRP (79 aa)). Catalysis depends on C458, which acts as the Cysteine persulfide intermediate.

It belongs to the ThiI family.

The protein localises to the cytoplasm. It catalyses the reaction [ThiI sulfur-carrier protein]-S-sulfanyl-L-cysteine + a uridine in tRNA + 2 reduced [2Fe-2S]-[ferredoxin] + ATP + H(+) = [ThiI sulfur-carrier protein]-L-cysteine + a 4-thiouridine in tRNA + 2 oxidized [2Fe-2S]-[ferredoxin] + AMP + diphosphate. It carries out the reaction [ThiS sulfur-carrier protein]-C-terminal Gly-Gly-AMP + S-sulfanyl-L-cysteinyl-[cysteine desulfurase] + AH2 = [ThiS sulfur-carrier protein]-C-terminal-Gly-aminoethanethioate + L-cysteinyl-[cysteine desulfurase] + A + AMP + 2 H(+). Its pathway is cofactor biosynthesis; thiamine diphosphate biosynthesis. In terms of biological role, catalyzes the ATP-dependent transfer of a sulfur to tRNA to produce 4-thiouridine in position 8 of tRNAs, which functions as a near-UV photosensor. Also catalyzes the transfer of sulfur to the sulfur carrier protein ThiS, forming ThiS-thiocarboxylate. This is a step in the synthesis of thiazole, in the thiamine biosynthesis pathway. The sulfur is donated as persulfide by IscS. The polypeptide is tRNA sulfurtransferase (Shewanella piezotolerans (strain WP3 / JCM 13877)).